Here is an 831-residue protein sequence, read N- to C-terminus: MPSHSRSRDRYRSERDPSRRYREVYDDDDDDDFDYHPRERRRYRRDDYQHDIRSHESPNYNDDLNEYDAAAEDPAVPLRSHDVEGRRRERSRAGESPIASPSRRDRNRGGEEYRRHGTYGDGGSPTRAMRDRRHRSRDGQRARPRDMDREARRQRRRERARGAAAMKHKSSDSTNSGSHLLSADALAKLRSHYDEEDQRERSQEQEQPRMESKRQRKRPIVGDEPQALAPFPDETPRGQSKGRIVSGAYLEEGHPEMEVRHRGGGGPAMEARWRKEGNWDGTMEGSDAQPPFWKRKKWWIVIGVLVVVLAIVIPVAVVMSKKHGHDDDKSGSSSSVDNSDSPYISSLDGLSHDSIPESAQGSILDPWTWYDTRDFNLTFTNETVGGLPIMGLNSTWDDSTRPNDNVPPLNESFPYGSQPIRGVNLGGWLSIEPFIVPSLFENYSSKDRIIDEYTLCKKLGSSAASTIEKHYADFISEQDFIDMRDAGLDHVRIQFSYWAVTTYDDDPYVAKISWRYLLRAIEYCRKYGLRVNLDPHGIPGSQNGWNHSGREGVIGWLNGTDGQLNRQRSLDFHNQISQFFAQPRYKNVVTIYGLVNEPLMLSLPVEDVLNWTTDATKLVQKNGISAYVTVHDGFLNLSKWKQMLKDRPDRMFLDTHQYTIFNTGQIVLNHTDRVKLICNDWYNMIKEINTTSAGWGPTICGEWSQADTDCAQYLNNVGRGTRWEGTFAIGDSTVYCPTADTGPTCSCASANAPPADYSDGYKKFLQTYAEAQMSAFGTAQGWFYWTWHTESAAQWSYKTAWKNGYMPKKAYAPDFKCGDDIPSFGDLPEYY.

6 stretches are compositionally biased toward basic and acidic residues: residues 1-24 (MPSH…YREV), 44-56 (RRDD…RSHE), 79-93 (RSHD…RSRA), 102-115 (SRRD…EYRR), 137-151 (RDGQ…DREA), and 198-213 (QRER…MESK). Disordered regions lie at residues 1–179 (MPSH…SGSH) and 192–241 (HYDE…GQSK). Residues 1 to 297 (MPSHSRSRDR…AQPPFWKRKK (297 aa)) lie on the Cytoplasmic side of the membrane. The helical; Signal-anchor for type II membrane protein transmembrane segment at 298-318 (WWIVIGVLVVVLAIVIPVAVV) threads the bilayer. Topologically, residues 319–831 (MSKKHGHDDD…PSFGDLPEYY (513 aa)) are extracellular. N-linked (GlcNAc...) asparagine glycosylation is found at Asn-376, Asn-381, Asn-393, Asn-410, Asn-442, Asn-546, and Asn-558. Glu-597 functions as the Proton donor in the catalytic mechanism. Asn-610, Asn-636, Asn-669, and Asn-689 each carry an N-linked (GlcNAc...) asparagine glycan. Catalysis depends on Glu-702, which acts as the Nucleophile.

It belongs to the glycosyl hydrolase 5 (cellulase A) family.

It is found in the cell membrane. The catalysed reaction is Successive hydrolysis of beta-D-glucose units from the non-reducing ends of (1-&gt;3)-beta-D-glucans, releasing alpha-glucose.. In terms of biological role, glucosidase involved in the degradation of cellulosic biomass. Active on lichenan. The protein is Probable glucan 1,3-beta-glucosidase D (exgD) of Aspergillus oryzae (strain ATCC 42149 / RIB 40) (Yellow koji mold).